We begin with the raw amino-acid sequence, 346 residues long: Protein RecA (346 aa).

65 to 72 (GPESSGKT) is a binding site for ATP.

It belongs to the RecA family.

Its subcellular location is the cytoplasm. In terms of biological role, can catalyze the hydrolysis of ATP in the presence of single-stranded DNA, the ATP-dependent uptake of single-stranded DNA by duplex DNA, and the ATP-dependent hybridization of homologous single-stranded DNAs. It interacts with LexA causing its activation and leading to its autocatalytic cleavage. In Enterococcus hirae (strain ATCC 9790 / DSM 20160 / JCM 8729 / LMG 6399 / NBRC 3181 / NCIMB 6459 / NCDO 1258 / NCTC 12367 / WDCM 00089 / R), this protein is Protein RecA.